A 135-amino-acid chain; its full sequence is Snaclec rhodocetin subunit gamma (135 aa).

Intrachain disulfides connect Cys-4–Cys-15, Cys-32–Cys-129, and Cys-104–Cys-121. The C-type lectin domain occupies 11–130; the sequence is YDQHCYQAFN…CQAKNPFVCK (120 aa).

Belongs to the snaclec family. In terms of assembly, heterotetramer of subunit alpha, beta, gamma and delta; only the gamma and the delta subunits are disulfide-linked. Alpha-beta heterodimer and gamma-delta heterodimer associate orthogonally, giving a cruciform conformation. This heterotetramer may covalently dimerizes thanks to the gamma subunit. Expressed by the venom gland.

Its subcellular location is the secreted. In terms of biological role, potent inhibitor of collagen-induced platelet aggregation. It acts by binding to the integrin alpha2A domain and blocks collagen binding to integrin alpha-2/beta-1 (ITGA2/ITGB1). The gamma/delta subunits mainly contribute to this activity. This chain is Snaclec rhodocetin subunit gamma, found in Calloselasma rhodostoma (Malayan pit viper).